A 375-amino-acid polypeptide reads, in one-letter code: 4,4'-diaponeurosporenoate glycosyltransferase (375 aa).

4 consecutive transmembrane segments (helical) span residues 3-23 (WLSR…ALIF), 164-184 (FYEG…NVFS), 277-297 (IMTA…GLCL), and 330-350 (FSNL…KIFI).

It belongs to the glycosyltransferase 2 family. CrtQ subfamily.

Its subcellular location is the cell membrane. It functions in the pathway carotenoid biosynthesis; staphyloxanthin biosynthesis; staphyloxanthin from farnesyl diphosphate: step 4/5. In terms of biological role, catalyzes the glycosylation of 4,4'-diaponeurosporenoate, i.e. the esterification of glucose at the C1'' position with the carboxyl group of 4,4'-diaponeurosporenic acid, to form glycosyl-4,4'-diaponeurosporenoate. This is a step in the biosynthesis of staphyloxanthin, an orange pigment present in most staphylococci strains. The protein is 4,4'-diaponeurosporenoate glycosyltransferase (crtQ) of Staphylococcus aureus (strain USA300).